The following is a 409-amino-acid chain: Exonuclease V (409 aa).

C86 is a [4Fe-4S] cluster binding site. The Mg(2+) site is built by D176 and D207. 3 residues coordinate [4Fe-4S] cluster: C386, C389, and C395.

The protein belongs to the EXO5 family. Monomer. Mg(2+) serves as cofactor. The cofactor is [4Fe-4S] cluster.

The protein localises to the cytoplasm. It is found in the nucleus. Its subcellular location is the mitochondrion. Functionally, single-stranded DNA (ssDNA) bidirectional exonuclease involved in DNA repair. Probably involved in DNA repair following ultraviolet (UV) irradiation and interstrand cross-links (ICLs) damage. Has both 5'-3' and 3'-5' exonuclease activities with a strong preference for 5'-ends. Acts as a sliding exonuclease that loads at ssDNA ends and then slides along the ssDNA prior to cutting; however the sliding and the 3'-5' exonuclease activities are abolished upon binding to the replication protein A (RPA) complex that enforces 5'-directionality activity. Its function is as follows. Plays a redundant role with the flap endonuclease FEN1/rad2 for the maintenance of mitochondrial DNA. This is Exonuclease V (exo5) from Schizosaccharomyces pombe (strain 972 / ATCC 24843) (Fission yeast).